Consider the following 93-residue polypeptide: Small ribosomal subunit protein uS19 (93 aa).

The protein belongs to the universal ribosomal protein uS19 family.

Its function is as follows. Protein S19 forms a complex with S13 that binds strongly to the 16S ribosomal RNA. This is Small ribosomal subunit protein uS19 (rpsS) from Helicobacter pylori (strain ATCC 700392 / 26695) (Campylobacter pylori).